The following is a 464-amino-acid chain: Cysteine--tRNA ligase (464 aa).

Cysteine 28 contributes to the Zn(2+) binding site. A 'HIGH' region motif is present at residues 30–40 (PTVYDTAHIGN). The Zn(2+) site is built by cysteine 212, histidine 237, and glutamate 241. Residues 270–274 (KMSKS) carry the 'KMSKS' region motif. Lysine 273 is a binding site for ATP.

Belongs to the class-I aminoacyl-tRNA synthetase family. As to quaternary structure, monomer. Requires Zn(2+) as cofactor.

It is found in the cytoplasm. The catalysed reaction is tRNA(Cys) + L-cysteine + ATP = L-cysteinyl-tRNA(Cys) + AMP + diphosphate. In Wolbachia pipientis subsp. Culex pipiens (strain wPip), this protein is Cysteine--tRNA ligase.